The sequence spans 61 residues: Large ribosomal subunit protein eL29y (61 aa).

The segment at 1–61 (MAKSKNHTAH…KSGENAGVEE (61 aa)) is disordered. A compositionally biased stretch (basic residues) spans 15 to 31 (KAHKNGIKKPRRHRHTP).

Belongs to the eukaryotic ribosomal protein eL29 family.

The chain is Large ribosomal subunit protein eL29y (RPL29B) from Arabidopsis thaliana (Mouse-ear cress).